Here is a 103-residue protein sequence, read N- to C-terminus: Large ribosomal subunit protein bL21 (103 aa).

This sequence belongs to the bacterial ribosomal protein bL21 family. In terms of assembly, part of the 50S ribosomal subunit. Contacts protein L20.

In terms of biological role, this protein binds to 23S rRNA in the presence of protein L20. The protein is Large ribosomal subunit protein bL21 of Nocardia farcinica (strain IFM 10152).